Reading from the N-terminus, the 217-residue chain is Protein LURP-one-related 2 (217 aa).

This sequence belongs to the LOR family.

Functionally, might be related to the phospholipid scramblase and tubby-like superfamily of membrane tethered transcription factors. This Arabidopsis thaliana (Mouse-ear cress) protein is Protein LURP-one-related 2.